A 437-amino-acid chain; its full sequence is Nuclear hormone receptor family member nhr-100 (437 aa).

The segment at residues 21 to 96 (DTSCLVCGDP…VGMDANAVRS (76 aa)) is a DNA-binding region (nuclear receptor). NR C4-type zinc fingers lie at residues 24 to 44 (CLVC…CNGC) and 60 to 79 (CSFN…CRAC). The NR LBD domain maps to 141 to 409 (QTKEIIAHML…SGGGLPYDIH (269 aa)).

This sequence belongs to the nuclear hormone receptor family.

It is found in the nucleus. Functionally, orphan nuclear receptor. This is Nuclear hormone receptor family member nhr-100 (nhr-100) from Caenorhabditis elegans.